Reading from the N-terminus, the 211-residue chain is Large ribosomal subunit protein uL3 (211 aa).

It belongs to the universal ribosomal protein uL3 family. As to quaternary structure, part of the 50S ribosomal subunit. Forms a cluster with proteins L14 and L19.

One of the primary rRNA binding proteins, it binds directly near the 3'-end of the 23S rRNA, where it nucleates assembly of the 50S subunit. This chain is Large ribosomal subunit protein uL3, found in Citrifermentans bemidjiense (strain ATCC BAA-1014 / DSM 16622 / JCM 12645 / Bem) (Geobacter bemidjiensis).